A 600-amino-acid polypeptide reads, in one-letter code: Elongation factor 4 (600 aa).

Residues 5-187 (KYIRNFSIIA…AIVNKLPPPK (183 aa)) enclose the tr-type G domain. GTP is bound by residues 17 to 22 (DHGKST) and 134 to 137 (NKLD).

Belongs to the TRAFAC class translation factor GTPase superfamily. Classic translation factor GTPase family. LepA subfamily.

It localises to the cell inner membrane. It catalyses the reaction GTP + H2O = GDP + phosphate + H(+). In terms of biological role, required for accurate and efficient protein synthesis under certain stress conditions. May act as a fidelity factor of the translation reaction, by catalyzing a one-codon backward translocation of tRNAs on improperly translocated ribosomes. Back-translocation proceeds from a post-translocation (POST) complex to a pre-translocation (PRE) complex, thus giving elongation factor G a second chance to translocate the tRNAs correctly. Binds to ribosomes in a GTP-dependent manner. The polypeptide is Elongation factor 4 (Rickettsia africae (strain ESF-5)).